A 139-amino-acid polypeptide reads, in one-letter code: Actin-depolymerizing factor 1 (139 aa).

The 135-residue stretch at 5 to 139 (ASGMAVHDDC…GLDVIQSRAN (135 aa)) folds into the ADF-H domain.

This sequence belongs to the actin-binding proteins ADF family.

In terms of biological role, actin-depolymerizing protein. Severs actin filaments (F-actin) and binds to actin monomers. The polypeptide is Actin-depolymerizing factor 1 (ADF1) (Petunia hybrida (Petunia)).